The primary structure comprises 502 residues: Ribose import ATP-binding protein RbsA (502 aa).

2 ABC transporter domains span residues 6–242 and 253–496; these read IDMT…IARD and ALGA…SGAR. ATP is bound at residue 38–45; it reads GQNGAGKS.

This sequence belongs to the ABC transporter superfamily. Ribose importer (TC 3.A.1.2.1) family. The complex is composed of an ATP-binding protein (RbsA), two transmembrane proteins (RbsC) and a solute-binding protein (RbsB).

The protein resides in the cell inner membrane. The catalysed reaction is D-ribose(out) + ATP + H2O = D-ribose(in) + ADP + phosphate + H(+). In terms of biological role, part of the ABC transporter complex RbsABC involved in ribose import. Responsible for energy coupling to the transport system. In Cereibacter sphaeroides (strain ATCC 17023 / DSM 158 / JCM 6121 / CCUG 31486 / LMG 2827 / NBRC 12203 / NCIMB 8253 / ATH 2.4.1.) (Rhodobacter sphaeroides), this protein is Ribose import ATP-binding protein RbsA.